The sequence spans 43 residues: AAPCFCPGKPDRGDLWILRGTCPGGYGYTSNCYKWPNICCYPH.

Disulfide bonds link C4/C39, C6/C32, and C22/C40.

This sequence belongs to the sea anemone type 3 (BDS) potassium channel toxin family.

It localises to the secreted. It is found in the nematocyst. In terms of biological role, acts as a gating modifier on both Kv and Nav ion channels. Voltage-dependently inhibits voltage-gated potassium channels Kv3 (Kv3.1/KCNC1, Kv3.2/KCNC2 and Kv3.4/KCNC4). Slows inactivation of the voltage-gated sodium channel Nav1.7/SCN9A. Inhibits all Kv3.1, Kv3.2 and Kv3.4 by about 50% when tested at a voltage of +40 mV. May act by binding residues in voltage-sensing domains S3b and S4 of Kv3. Tests have been done on human Nav1.7/SCN9A and rat SCG neurons that mostly carry Nav1.7 channels (EC(50)=300 nM). This toxin also reduces blood pressure. This is DeltaKappa-actitoxin-Avd4b from Anemonia sulcata (Mediterranean snakelocks sea anemone).